Consider the following 212-residue polypeptide: ATP-dependent dethiobiotin synthetase BioD (212 aa).

13-18 contacts ATP; that stretch reads GIGKTV. Residue Thr-17 participates in Mg(2+) binding. Residue Lys-33 is part of the active site. Glu-100 contributes to the Mg(2+) binding site. Residues 100–103 and 184–186 contribute to the ATP site; these read EGAG and PHV.

This sequence belongs to the dethiobiotin synthetase family. In terms of assembly, homodimer. Requires Mg(2+) as cofactor.

The protein resides in the cytoplasm. It carries out the reaction (7R,8S)-7,8-diammoniononanoate + CO2 + ATP = (4R,5S)-dethiobiotin + ADP + phosphate + 3 H(+). Its pathway is cofactor biosynthesis; biotin biosynthesis; biotin from 7,8-diaminononanoate: step 1/2. In terms of biological role, catalyzes a mechanistically unusual reaction, the ATP-dependent insertion of CO2 between the N7 and N8 nitrogen atoms of 7,8-diaminopelargonic acid (DAPA, also called 7,8-diammoniononanoate) to form a ureido ring. This Nitrobacter hamburgensis (strain DSM 10229 / NCIMB 13809 / X14) protein is ATP-dependent dethiobiotin synthetase BioD.